The sequence spans 600 residues: NADH-quinone oxidoreductase subunit C/D (600 aa).

The interval 1 to 190 (MVNNMTDLTA…DPFELTKAKQ (190 aa)) is NADH dehydrogenase I subunit C. The tract at residues 214–600 (DFMFLNLGPN…IDFVMSDVDR (387 aa)) is NADH dehydrogenase I subunit D.

It in the N-terminal section; belongs to the complex I 30 kDa subunit family. This sequence in the C-terminal section; belongs to the complex I 49 kDa subunit family. As to quaternary structure, NDH-1 is composed of 13 different subunits. Subunits NuoB, CD, E, F, and G constitute the peripheral sector of the complex.

Its subcellular location is the cell inner membrane. It carries out the reaction a quinone + NADH + 5 H(+)(in) = a quinol + NAD(+) + 4 H(+)(out). Functionally, NDH-1 shuttles electrons from NADH, via FMN and iron-sulfur (Fe-S) centers, to quinones in the respiratory chain. The immediate electron acceptor for the enzyme in this species is believed to be ubiquinone. Couples the redox reaction to proton translocation (for every two electrons transferred, four hydrogen ions are translocated across the cytoplasmic membrane), and thus conserves the redox energy in a proton gradient. The sequence is that of NADH-quinone oxidoreductase subunit C/D from Salmonella arizonae (strain ATCC BAA-731 / CDC346-86 / RSK2980).